We begin with the raw amino-acid sequence, 52 residues long: ATP synthase F(0) complex subunit 8 (52 aa).

A helical transmembrane segment spans residues leucine 10–phenylalanine 30.

Belongs to the ATPase protein 8 family. As to quaternary structure, component of the ATP synthase complex composed at least of ATP5F1A/subunit alpha, ATP5F1B/subunit beta, ATP5MC1/subunit c (homooctomer), MT-ATP6/subunit a, MT-ATP8/subunit 8, ATP5ME/subunit e, ATP5MF/subunit f, ATP5MG/subunit g, ATP5MK/subunit k, ATP5MJ/subunit j, ATP5F1C/subunit gamma, ATP5F1D/subunit delta, ATP5F1E/subunit epsilon, ATP5PF/subunit F6, ATP5PB/subunit b, ATP5PD/subunit d, ATP5PO/subunit OSCP. ATP synthase complex consists of a soluble F(1) head domain (subunits alpha(3) and beta(3)) - the catalytic core - and a membrane F(0) domain - the membrane proton channel (subunits c, a, 8, e, f, g, k and j). These two domains are linked by a central stalk (subunits gamma, delta, and epsilon) rotating inside the F1 region and a stationary peripheral stalk (subunits F6, b, d, and OSCP).

The protein localises to the mitochondrion membrane. Subunit 8, of the mitochondrial membrane ATP synthase complex (F(1)F(0) ATP synthase or Complex V) that produces ATP from ADP in the presence of a proton gradient across the membrane which is generated by electron transport complexes of the respiratory chain. ATP synthase complex consist of a soluble F(1) head domain - the catalytic core - and a membrane F(1) domain - the membrane proton channel. These two domains are linked by a central stalk rotating inside the F(1) region and a stationary peripheral stalk. During catalysis, ATP synthesis in the catalytic domain of F(1) is coupled via a rotary mechanism of the central stalk subunits to proton translocation. In vivo, can only synthesize ATP although its ATP hydrolase activity can be activated artificially in vitro. Part of the complex F(0) domain. The sequence is that of ATP synthase F(0) complex subunit 8 from Lycodon semicarinatus (Ryukyu odd-tooth snake).